The primary structure comprises 320 residues: Protein LATERAL ROOT PRIMORDIUM 1 (320 aa).

The tract at residues 90 to 110 (QTTVGTSSNNSGSGSGASGTA) is disordered. Positions 112, 115, 123, 128, 132, and 139 each coordinate Zn(2+). Positions 112–139 (CQDCGNQAKKECKQRRCRTCCKSRGFDC) form a DNA-binding region, zn(2)-C6 fungal-type; degenerate. The disordered stretch occupies residues 150–223 (AARRRERQVM…QDGGGSREAW (74 aa)). A compositionally biased stretch (low complexity) spans 168-177 (GSSLSTSSGT). Over residues 193-214 (ATSHTSTSNTPPQSFETSSSRQ) the composition is skewed to polar residues. The Required for homo- and heterodimerization signature appears at 256–259 (IGGH).

It belongs to the SHI protein family. Homodimer. In terms of tissue distribution, restricted to lateral root primordia.

The protein localises to the nucleus. In terms of biological role, transcription activator that binds DNA on 5'-ACTCTAC-3' and promotes auxin homeostasis-regulating gene expression (e.g. YUC genes), as well as genes affecting stamen development, cell expansion and timing of flowering. Synergistically with other SHI-related proteins, regulates gynoecium, stamen and leaf development in a dose-dependent manner, controlling apical-basal patterning. Promotes style and stigma formation, and influence vascular development during gynoecium development. May also have a role in the formation and/or maintenance of the shoot apical meristem (SAM). Modulates root growth. The chain is Protein LATERAL ROOT PRIMORDIUM 1 (LRP1) from Arabidopsis thaliana (Mouse-ear cress).